A 121-amino-acid polypeptide reads, in one-letter code: Copper transport protein CCH (121 aa).

Ala-2 carries the post-translational modification N-acetylalanine. The HMA domain occupies 2-65 (AQTVVLKVGM…TVSKTGKKTS (64 aa)). Residues Cys-13 and Cys-16 each contribute to the Cu cation site. Positions 70 to 121 (EAEAEPKAEADPKVETVTETKTEAETKTEAKVDAKADVEPKAAEAETKPSQV) are disordered. Residues 73-121 (AEPKAEADPKVETVTETKTEAETKTEAKVDAKADVEPKAAEAETKPSQV) show a composition bias toward basic and acidic residues.

This sequence belongs to the ATX1 family. It depends on Cu cation as a cofactor. As to expression, expressed in phloem (at protein level).

Involved in copper homeostasis. Can complement the yeast mutants atx1 and sod1. In Arabidopsis thaliana (Mouse-ear cress), this protein is Copper transport protein CCH (CCH).